The primary structure comprises 292 residues: Poly-beta-1,6-N-acetyl-D-glucosamine N-deacetylase (292 aa).

A signal peptide spans 1–28 (MKYRKFIILVLSILIILPVSTLDGHHIA). Residues 114 to 292 (RSVWINFDDM…WDGFHEKDET (179 aa)) form the NodB homology domain.

Belongs to the polysaccharide deacetylase family.

It localises to the secreted. Its subcellular location is the cell wall. Functionally, catalyzes the N-deacetylation of poly-beta-1,6-N-acetyl-D-glucosamine (PNAG, also referred to as PIA), a biofilm adhesin polysaccharide. N-deacetylation is crucial for attachment of the polysaccharide to the bacterial cell surface; it leads to the introduction of positive charges in the otherwise neutral PIA polymer, allowing electrostatic interactions. This is Poly-beta-1,6-N-acetyl-D-glucosamine N-deacetylase (icaB) from Staphylococcus aureus (strain COL).